The following is a 310-amino-acid chain: Ferredoxin--NADP reductase (310 aa).

FAD is bound by residues Asp-26, Gln-34, Tyr-39, Val-78, Phe-108, Asp-268, and Thr-308.

Belongs to the ferredoxin--NADP reductase type 2 family. Homodimer. FAD is required as a cofactor.

The enzyme catalyses 2 reduced [2Fe-2S]-[ferredoxin] + NADP(+) + H(+) = 2 oxidized [2Fe-2S]-[ferredoxin] + NADPH. This chain is Ferredoxin--NADP reductase, found in Lactobacillus helveticus (strain DPC 4571).